A 154-amino-acid polypeptide reads, in one-letter code: Endoribonuclease YbeY (154 aa).

H113, H117, and H123 together coordinate Zn(2+).

It belongs to the endoribonuclease YbeY family. Requires Zn(2+) as cofactor.

Its subcellular location is the cytoplasm. Single strand-specific metallo-endoribonuclease involved in late-stage 70S ribosome quality control and in maturation of the 3' terminus of the 16S rRNA. This Vibrio cholerae serotype O1 (strain ATCC 39315 / El Tor Inaba N16961) protein is Endoribonuclease YbeY.